A 166-amino-acid chain; its full sequence is 3-isopropylmalate dehydratase small subunit (166 aa).

Belongs to the LeuD family. LeuD type 2 subfamily. Heterodimer of LeuC and LeuD.

It carries out the reaction (2R,3S)-3-isopropylmalate = (2S)-2-isopropylmalate. The protein operates within amino-acid biosynthesis; L-leucine biosynthesis; L-leucine from 3-methyl-2-oxobutanoate: step 2/4. In terms of biological role, catalyzes the isomerization between 2-isopropylmalate and 3-isopropylmalate, via the formation of 2-isopropylmaleate. In Heliobacterium modesticaldum (strain ATCC 51547 / Ice1), this protein is 3-isopropylmalate dehydratase small subunit.